Reading from the N-terminus, the 96-residue chain is Aspartyl/glutamyl-tRNA(Asn/Gln) amidotransferase subunit C (96 aa).

This sequence belongs to the GatC family. Heterotrimer of A, B and C subunits.

It carries out the reaction L-glutamyl-tRNA(Gln) + L-glutamine + ATP + H2O = L-glutaminyl-tRNA(Gln) + L-glutamate + ADP + phosphate + H(+). The enzyme catalyses L-aspartyl-tRNA(Asn) + L-glutamine + ATP + H2O = L-asparaginyl-tRNA(Asn) + L-glutamate + ADP + phosphate + 2 H(+). Its function is as follows. Allows the formation of correctly charged Asn-tRNA(Asn) or Gln-tRNA(Gln) through the transamidation of misacylated Asp-tRNA(Asn) or Glu-tRNA(Gln) in organisms which lack either or both of asparaginyl-tRNA or glutaminyl-tRNA synthetases. The reaction takes place in the presence of glutamine and ATP through an activated phospho-Asp-tRNA(Asn) or phospho-Glu-tRNA(Gln). This Bacillus anthracis (strain A0248) protein is Aspartyl/glutamyl-tRNA(Asn/Gln) amidotransferase subunit C.